A 213-amino-acid polypeptide reads, in one-letter code: MSDNNQCVIVGIAGASASGKSLIASTIYNELREKVGDHQIGVITEDCYYSDQSHLSMEERVKTNYDHPNALDHDLLCEHLQQLMSGNAVEVPEYSYTEHTRTSETTTLTPKKVIILEGILLLTDPRLRKLMHASVFMDTPLDICLLRRVKRDVEERGRTMDTVLKQYQETVRPMFMQFIEPSKQHADIIVPRGGKNRIAIDVLKAHIAKLLKS.

14 to 21 (GASASGKS) serves as a coordination point for ATP.

Belongs to the uridine kinase family.

It localises to the cytoplasm. It carries out the reaction uridine + ATP = UMP + ADP + H(+). The enzyme catalyses cytidine + ATP = CMP + ADP + H(+). It participates in pyrimidine metabolism; CTP biosynthesis via salvage pathway; CTP from cytidine: step 1/3. It functions in the pathway pyrimidine metabolism; UMP biosynthesis via salvage pathway; UMP from uridine: step 1/1. This Vibrio atlanticus (strain LGP32) (Vibrio splendidus (strain Mel32)) protein is Uridine kinase.